A 119-amino-acid polypeptide reads, in one-letter code: UPF0102 protein FN1370 (119 aa).

It belongs to the UPF0102 family.

In Fusobacterium nucleatum subsp. nucleatum (strain ATCC 25586 / DSM 15643 / BCRC 10681 / CIP 101130 / JCM 8532 / KCTC 2640 / LMG 13131 / VPI 4355), this protein is UPF0102 protein FN1370.